A 315-amino-acid chain; its full sequence is Protein-export membrane protein SecF (315 aa).

6 consecutive transmembrane segments (helical) span residues 35–55 (MVLYPLVVFLVAALILAVHFP), 152–172 (QGIKAVIYAFIGMAIVVFLFF), 181–201 (IIFSAFSDMVIALATMGILGI), 205–225 (TATIAALLMLIGYTVDSNILL), 242–264 (LSAVSTGFTMSTTTLGALFILWL), and 282–302 (LLADFMNTWIFNAGVLRWYIA).

The protein belongs to the SecD/SecF family. SecF subfamily. As to quaternary structure, part of the protein translocation apparatus. Forms a complex with SecD.

Its subcellular location is the cell membrane. Its function is as follows. Involved in protein export. The protein is Protein-export membrane protein SecF of Thermococcus gammatolerans (strain DSM 15229 / JCM 11827 / EJ3).